The sequence spans 119 residues: uncharacterized protein (119 aa).

The helical transmembrane segment at 74–91 threads the bilayer; the sequence is LSVHFLLNVISAILSMLI.

It is found in the membrane. This is an uncharacterized protein from Schizosaccharomyces pombe (strain 972 / ATCC 24843) (Fission yeast).